Consider the following 393-residue polypeptide: NAD(P)H-quinone oxidoreductase subunit H, chloroplastic (393 aa).

The protein belongs to the complex I 49 kDa subunit family. NDH is composed of at least 16 different subunits, 5 of which are encoded in the nucleus.

The protein resides in the plastid. It localises to the chloroplast thylakoid membrane. The catalysed reaction is a plastoquinone + NADH + (n+1) H(+)(in) = a plastoquinol + NAD(+) + n H(+)(out). The enzyme catalyses a plastoquinone + NADPH + (n+1) H(+)(in) = a plastoquinol + NADP(+) + n H(+)(out). NDH shuttles electrons from NAD(P)H:plastoquinone, via FMN and iron-sulfur (Fe-S) centers, to quinones in the photosynthetic chain and possibly in a chloroplast respiratory chain. The immediate electron acceptor for the enzyme in this species is believed to be plastoquinone. Couples the redox reaction to proton translocation, and thus conserves the redox energy in a proton gradient. The chain is NAD(P)H-quinone oxidoreductase subunit H, chloroplastic from Populus alba (White poplar).